The following is a 93-amino-acid chain: Bacterial microcompartment shell protein PduA (93 aa).

One can recognise a BMC domain in the interval 5–89; that stretch reads ALGMVETKGL…PHTDVEKILP (85 aa).

The protein belongs to the bacterial microcompartments protein family. In terms of assembly, homohexamer with a central pore; Lys-26 and Arg-79 interactions are very important for hexamer symmetry. The hexamers pack against each other in arrays. Interacts individually with shell proteins PduB, PduB', PduJ, PduK, PduN and PduU. Modeling suggests PduC, PduD, PduE, PduL and PduP interact with a cleft formed by the C-terminal segments of 2 adjacent PduA subunits (on the BMC luminal side) in the hexamer.

The protein resides in the bacterial microcompartment. The protein operates within polyol metabolism; 1,2-propanediol degradation. Its function is as follows. One of the major shell proteins of the bacterial microcompartment (BMC) dedicated to 1,2-propanediol (1,2-PD) degradation, probably important for metabolite diffusion into and out of the BMC. Overexpression of a C-terminally mutated form (PduA*) makes thin parallel filaments with a honeycomb-like assembly in cross-section that probably form nanotubes. The filaments interfere with septation. PduA is probably the hub for binding multiple enzymes to the interior of the BMC. At least one of PduA or PduJ is required for BMC assembly; it must be encoded as the first gene in the pdu operon. In terms of biological role, expression of a cosmid containing the full 21-gene pdu operon in E.coli allows E.coli to grow on 1,2-PD with the appearance of BMCs in its cytoplasm. Overexpression of this protein leads to aberrant intracellular filaments. The 1,2-PD-specific bacterial microcompartment (BMC) concentrates low levels of 1,2-PD catabolic enzymes, concentrates volatile reaction intermediates thus enhancing pathway flux and keeps the level of toxic, mutagenic propionaldehyde low. This Citrobacter freundii protein is Bacterial microcompartment shell protein PduA.